The following is a 353-amino-acid chain: Lactosylceramide 4-alpha-galactosyltransferase (353 aa).

At 1-22 (MSKPPDLLLRLLRGAPRQRVCT) the chain is on the cytoplasmic side. A helical; Signal-anchor for type II membrane protein transmembrane segment spans residues 23-43 (LFIIGFKFTFFVSIMIYWHVV). Over 44–353 (GEPKEKGQLY…TTHEAMKMYL (310 aa)) the chain is Lumenal. N-linked (GlcNAc...) asparagine glycosylation is present at asparagine 121. Residues 192 to 194 (DTD) carry the DXD motif motif. N-linked (GlcNAc...) asparagine glycosylation occurs at asparagine 203.

The protein belongs to the glycosyltransferase 32 family. In terms of tissue distribution, ubiquitous. Highly expressed in kidney, heart, spleen, liver, testis and placenta.

It is found in the golgi apparatus membrane. It carries out the reaction a beta-D-Gal-(1-&gt;4)-beta-D-Glc-(1&lt;-&gt;1)-Cer(d18:1(4E)) + UDP-alpha-D-galactose = a globoside Gb3Cer (d18:1(4E)) + UDP + H(+). The enzyme catalyses a beta-D-Gal-(1&lt;-&gt;1')-ceramide + UDP-alpha-D-galactose = alpha-D-Gal-(1-&gt;4)-beta-D-Gal-(1&lt;-&gt;1')-Cer + UDP + H(+). It functions in the pathway glycolipid biosynthesis. Functionally, catalyzes the transfer of galactose from UDP-alpha-D-galactose to lactosylceramide/beta-D-galactosyl-(1-&gt;4)-beta-D-glucosyl-(1&lt;-&gt;1)-ceramide(d18:1(4E)) to produce globotriaosylceramide/globoside Gb3Cer (d18:1(4E)). Also able to transfer galactose to galactosylceramide/beta-D-Gal-(1&lt;-&gt;1')-Cer. Globoside Gb3Cer is a glycosphingolipid of the globo serie, one of the major types of neutral root structures of glycosphingolipids, that constitute a significant portion of mammalian cell membranes. Globotriaosylceramide/globoside Gb3Cer in blood and tissue cell membranes is the antigen Pk of blood histogroup P. In terms of biological role, (Microbial infection) Globotriaosylceramide is one of the cellular ligands for bacterial verotoxins. The protein is Lactosylceramide 4-alpha-galactosyltransferase (A4GALT) of Homo sapiens (Human).